The chain runs to 364 residues: Putative galactoside 2-alpha-L-fucosyltransferase svh-11 (364 aa).

The Cytoplasmic portion of the chain corresponds to 1–19 (MRLFHFLKFLTINNFSRYC). A helical; Signal-anchor for type II membrane protein membrane pass occupies residues 20–42 (LKIVKVHIIWITIICIIYFNWRF). Topologically, residues 43–364 (KKLDFMAIPY…SANSFTVVRS (322 aa)) are lumenal. Asn60 and Asn128 each carry an N-linked (GlcNAc...) asparagine glycan.

It belongs to the glycosyltransferase 11 family.

The protein localises to the golgi apparatus. Its subcellular location is the golgi stack membrane. In terms of biological role, mediates the transfer of fucose to the terminal galactose on glycan chains of cell surface glycoproteins and glycolipids. Required for axon regeneration after injury. In Caenorhabditis elegans, this protein is Putative galactoside 2-alpha-L-fucosyltransferase svh-11.